Reading from the N-terminus, the 1123-residue chain is Telomerase reverse transcriptase (1123 aa).

The RNA-interacting domain 1 stretch occupies residues methionine 1 to serine 230. Positions valine 58–leucine 197 are GQ motif. The interval tryptophan 137–leucine 141 is required for regulating specificity for telomeric DNA and for processivity for primer elongation. The disordered stretch occupies residues alanine 202–glutamate 311. Positions arginine 222–arginine 240 match the Bipartite nuclear localization signal motif. Serine 227 is subject to Phosphoserine; by PKB/AKT1. A linker region spans residues glycine 231–alanine 308. Low complexity predominate over residues proline 260–serine 279. Residues histidine 309–glycine 539 form an RNA-interacting domain 2 region. The TFLY; involved in RNA binding motif lies at threonine 312–tyrosine 317. Positions alanine 360–histidine 510 are QFP motif. The tract at residues leucine 381–alanine 401 is CP motif. Position 446 is a phosphoserine; by DYRK2 (serine 446). Positions glutamate 595–leucine 926 constitute a Reverse transcriptase domain. Tyrosine 697 bears the Phosphotyrosine; by SRC-type Tyr-kinases mark. Positions 702, 859, and 860 each coordinate Mg(2+). The tract at residues leucine 905–phenylalanine 919 is required for oligomerization. The interval tryptophan 921–leucine 925 is primer grip sequence. Positions aspartate 927–aspartate 1123 are CTE.

It belongs to the reverse transcriptase family. Telomerase subfamily. Catalytic component of the telomerase holoenzyme complex composed of one molecule of TERT, one molecule of WRAP53/TCAB1, two molecules of H/ACA ribonucleoprotein complex subunits DKC1, NOP10, NHP2 and GAR1, and a telomerase RNA template component (TERC). The telomerase holoenzyme complex is associated with TEP1, SMG6/EST1A and POT1. The molecular chaperone HSP90/P23 complex is required for correct assembly and stabilization of the active telomerase. Interacts directly with HSP90A and PTGES3. Interacts with HSPA1A; the interaction occurs in the absence of TERC and dissociates once the complex has formed. Interacts with RAN; the interaction promotes nuclear export of TERT. Interacts with XPO1. Interacts with PTPN11; the interaction retains TERT in the nucleus. Interacts with NCL (via RRM1 and C-terminal RRM4/Arg/Gly-rich domains); the interaction is important for nucleolar localization of TERT. Interacts with SMARCA4 (via the bromodomain); the interaction regulates Wnt-mediated signaling. Interacts with MCRS1 (isoform MCRS2); the interaction inhibits in vitro telomerase activity. Interacts with PIF1; the interaction has no effect on the elongation activity of TERT. Interacts with PML; the interaction recruits TERT to PML bodies and inhibits telomerase activity. Interacts with GNL3L. Interacts with isoform 1 and isoform 2 of NVL. Interacts with DHX36. Interacts with ATF7. Post-translationally, phosphorylation at Tyr-697 under oxidative stress leads to translocation of TERT to the cytoplasm and reduces its antiapoptotic activity. Dephosphorylated by SHP2/PTPN11 leading to nuclear retention. Phosphorylation at Ser-227 by the AKT pathway promotes nuclear location. Phosphorylation at the G2/M phase at Ser-446 by DYRK2 promotes ubiquitination by the EDVP complex and degradation. In terms of processing, ubiquitinated by the EDVP complex, a E3 ligase complex following phosphorylation at Ser-446 by DYRK2. Ubiquitinated leads to proteasomal degradation.

The protein resides in the nucleus. The protein localises to the nucleolus. It localises to the nucleoplasm. Its subcellular location is the chromosome. It is found in the telomere. The protein resides in the cytoplasm. The protein localises to the PML body. It catalyses the reaction DNA(n) + a 2'-deoxyribonucleoside 5'-triphosphate = DNA(n+1) + diphosphate. Functionally, telomerase is a ribonucleoprotein enzyme essential for the replication of chromosome termini in most eukaryotes. Active in progenitor and cancer cells. Inactive, or very low activity, in normal somatic cells. Catalytic component of the teleromerase holoenzyme complex whose main activity is the elongation of telomeres by acting as a reverse transcriptase that adds simple sequence repeats to chromosome ends by copying a template sequence within the RNA component of the enzyme. Catalyzes the RNA-dependent extension of 3'-chromosomal termini with the 6-nucleotide telomeric repeat unit, 5'-TTAGGG-3'. The catalytic cycle involves primer binding, primer extension and release of product once the template boundary has been reached or nascent product translocation followed by further extension. More active on substrates containing 2 or 3 telomeric repeats. Telomerase activity is regulated by a number of factors including telomerase complex-associated proteins, chaperones and polypeptide modifiers. Modulates Wnt signaling. Plays important roles in aging and antiapoptosis. The polypeptide is Telomerase reverse transcriptase (TERT) (Canis lupus familiaris (Dog)).